The chain runs to 487 residues: b(0,+)-type amino acid transporter 1 (487 aa).

Residues 1–20 are disordered; sequence MEETSLRRRREDEKSTHSTE. Residues 1–31 are Cytoplasmic-facing; sequence MEETSLRRRREDEKSTHSTELKTTSLQKEVG. Ser18 is subject to Phosphoserine. Residues 32 to 55 form a helical membrane-spanning segment; it reads LLSGICIIVGTIIGSGIFISPKSV. 43–47 is an L-arginine binding site; the sequence is IIGSG. Residues 56-62 are Extracellular-facing; that stretch reads LANTESV. Residues 63–84 traverse the membrane as a helical segment; that stretch reads GPCLIIWAACGILATLGALCFA. Topologically, residues 85–110 are cytoplasmic; that stretch reads ELGTMITKSGGEYPYLMEAFGPIPAY. The chain crosses the membrane as a helical span at residues 111-137; the sequence is LFSWTSLIVMKPSSFAIICLSFSEYVC. Residues 138–147 are Extracellular-facing; that stretch reads AAFYSGCKPP. 2 helical membrane-spanning segments follow: residues 148 to 169 and 170 to 193; these read AVVVKLLAAAAILFITTVNALS and VRLGSYVQNVFTAAKMVIVAIIII. The Extracellular segment spans residues 194–217; that stretch reads SGLVFLAQGNVKNFQNSFEGTQTS. A helical transmembrane segment spans residues 218–238; the sequence is VGAISLAFYNGLWAYDGWNQL. Residue Asp233 participates in L-arginine binding. The Cytoplasmic segment spans residues 239-251; that stretch reads NYITEELRNPYRN. Residues 252–274 form a helical membrane-spanning segment; that stretch reads LPMAIVIGIPLVTVCYILMNIAY. The Extracellular segment spans residues 275–302; sequence FTVMTPTELLQSQAVAVTFGDRVLYPAS. The chain crosses the membrane as a helical span at residues 303–325; the sequence is WVVPLFVAFSTIGAANGTCFTAG. The Cytoplasmic portion of the chain corresponds to 326–351; the sequence is RLIYVAGREGHMLKVLSYISVKRLTP. 2 helical membrane passes run 352-370 and 371-391; these read APALIFYGIIAIIYIIPGD and INSLVNYFSFAAWLFYGMTIL. The Cytoplasmic portion of the chain corresponds to 392 to 410; the sequence is GLVVMRFTRKDLERPIKVP. Residues 411-431 form a helical membrane-spanning segment; the sequence is LFIPIIVILVSLFLILAPIIS. Topologically, residues 432–434 are extracellular; that stretch reads EPA. The chain crosses the membrane as a helical span at residues 435-450; it reads WEYLYCVLFILSGLIF. At 451–487 the chain is on the cytoplasmic side; sequence YFLFVYYKFGWAQRISRPVTKHLQMLMEVVPPEKDPE.

The protein belongs to the amino acid-polyamine-organocation (APC) superfamily. In terms of assembly, disulfide-linked heterodimer composed of the catalytic light chain subunit SLC7A9 and the heavy chain subunit SLC3A1. The heterodimer is the minimal functional unit. Assembles in heterotetramers (dimers of heterodimers) and higher order oligomers; the oligomerization is mediated by SLC3A1 likely to prevent degradation and facilitate heteromer trafficking to the plasma membrane. Interacts with CAV1. As to expression, expressed in the brush border membrane in the kidney (at protein level).

Its subcellular location is the apical cell membrane. It catalyses the reaction L-leucine(out) + L-arginine(in) = L-leucine(in) + L-arginine(out). The enzyme catalyses L-histidine(out) + L-arginine(in) = L-histidine(in) + L-arginine(out). It carries out the reaction L-arginine(in) + L-phenylalanine(out) = L-arginine(out) + L-phenylalanine(in). The catalysed reaction is L-cysteine(out) + L-arginine(in) = L-cysteine(in) + L-arginine(out). It catalyses the reaction L-cystine(out) + L-arginine(in) = L-cystine(in) + L-arginine(out). The enzyme catalyses L-lysine(out) + L-arginine(in) = L-lysine(in) + L-arginine(out). Associates with SLC3A1 to form a functional transporter complex that mediates the electrogenic exchange between cationic amino acids and neutral amino acids, with a stoichiometry of 1:1. Has system b(0,+)-like activity with high affinity for extracellular cationic amino acids and L-cystine and lower affinity for intracellular neutral amino acids. Substrate exchange is driven by high concentration of intracellular neutral amino acids and the intracellular reduction of L-cystine to L-cysteine. Required for reabsorption of L-cystine and dibasic amino acids across the brush border membrane in renal proximal tubules. The chain is b(0,+)-type amino acid transporter 1 (Slc7a9) from Mus musculus (Mouse).